The primary structure comprises 223 residues: Probable transaldolase (223 aa).

The Schiff-base intermediate with substrate role is filled by K86.

The protein belongs to the transaldolase family. Type 3B subfamily.

Its subcellular location is the cytoplasm. The enzyme catalyses D-sedoheptulose 7-phosphate + D-glyceraldehyde 3-phosphate = D-erythrose 4-phosphate + beta-D-fructose 6-phosphate. It participates in carbohydrate degradation; pentose phosphate pathway; D-glyceraldehyde 3-phosphate and beta-D-fructose 6-phosphate from D-ribose 5-phosphate and D-xylulose 5-phosphate (non-oxidative stage): step 2/3. Its function is as follows. Transaldolase is important for the balance of metabolites in the pentose-phosphate pathway. The sequence is that of Probable transaldolase (tal) from Thermoplasma volcanium (strain ATCC 51530 / DSM 4299 / JCM 9571 / NBRC 15438 / GSS1).